A 365-amino-acid chain; its full sequence is Histidinol-phosphate aminotransferase (365 aa).

Lys-222 is modified (N6-(pyridoxal phosphate)lysine).

This sequence belongs to the class-II pyridoxal-phosphate-dependent aminotransferase family. Histidinol-phosphate aminotransferase subfamily. Homodimer. Requires pyridoxal 5'-phosphate as cofactor.

The catalysed reaction is L-histidinol phosphate + 2-oxoglutarate = 3-(imidazol-4-yl)-2-oxopropyl phosphate + L-glutamate. It functions in the pathway amino-acid biosynthesis; L-histidine biosynthesis; L-histidine from 5-phospho-alpha-D-ribose 1-diphosphate: step 7/9. This is Histidinol-phosphate aminotransferase from Geobacillus thermodenitrificans (strain NG80-2).